The chain runs to 354 residues: Lysophosphatidic acid receptor 3 (354 aa).

Residues 1–31 (MNECHYDKRMDFFYNRSNTDTADEWTGTKLV) lie on the Extracellular side of the membrane. A glycan (N-linked (GlcNAc...) asparagine) is linked at N15. A helical transmembrane segment spans residues 32-52 (IVLCVGTFFCLFIFFSNSLVI). Residues 53-67 (AAVITNRKFHFPFYY) lie on the Cytoplasmic side of the membrane. The helical transmembrane segment at 68-88 (LLANLAAADFFAGIAYVFLMF) threads the bilayer. The Extracellular segment spans residues 89 to 101 (NTGPVSKTLTVNR). The chain crosses the membrane as a helical span at residues 102–124 (WFLRQGLLDTSLTASLANLLVIA). Residues 125–146 (VERHMSIMRMRVHSNLTKKRVT) lie on the Cytoplasmic side of the membrane. A helical transmembrane segment spans residues 147 to 167 (LLILLVWAIAIFMGAVPTLGW). Residues 168–186 (NCLCNISACSSLAPIYSRS) lie on the Extracellular side of the membrane. N172 carries N-linked (GlcNAc...) asparagine glycosylation. A helical membrane pass occupies residues 187 to 207 (YLIFWTVSNLLAFFIMVAVYV). At 208–240 (RIYMYVKRKTNVLSPHTSGSISRRRAPMKLMKT) the chain is on the cytoplasmic side. The chain crosses the membrane as a helical span at residues 241 to 261 (VMTVLGAFVVCWTPGLVVLLL). The Extracellular segment spans residues 262-276 (DGLNCKQCNVQHVKR). The helical transmembrane segment at 277 to 295 (WFLLLALLNSVMNPIIYSY) threads the bilayer. Residues 296–354 (KDEDMYNTMRKMICCALQDSNTERRPSRNPSTIHSRSETGSQYLEDSISQGPVCNKNGS) are Cytoplasmic-facing. C309 carries S-palmitoyl cysteine lipidation. Positions 315 to 354 (SNTERRPSRNPSTIHSRSETGSQYLEDSISQGPVCNKNGS) are disordered. Residues 323 to 354 (RNPSTIHSRSETGSQYLEDSISQGPVCNKNGS) show a composition bias toward polar residues.

Belongs to the G-protein coupled receptor 1 family. Most abundantly expressed in testes, kidney, and lung, with moderate levels in small intestine, and low levels in heart, stomach, spleen, and adult and perinatal brain. Little or no expression in embryonic brain, liver, or thymus.

It localises to the cell membrane. Its function is as follows. Receptor for lysophosphatidic acid (LPA), a mediator of diverse cellular activities. Seems to be coupled to the G(i)/G(o) and G(q) families of heteromeric G proteins. The sequence is that of Lysophosphatidic acid receptor 3 (Lpar3) from Mus musculus (Mouse).